The sequence spans 420 residues: Nucleoporin NUP42 (420 aa).

The C3H1-type zinc finger occupies 1–25 (MTICQFFLQGRCRFGDRCWNEHPGA). One copy of the FG 1 repeat lies at 14–15 (FG). Residues 25–111 (ARGAGGARQP…FASPLSDEQK (87 aa)) form a disordered region. The segment covering 42-67 (SGNNRRGWNASSQRYSNVIQPSSFPK) has biased composition (polar residues). 10 FG repeats span residues 82–83 (FG), 95–96 (FG), 218–219 (FG), 220–221 (FG), 228–229 (FG), 265–266 (FG), 271–272 (FG), 288–289 (FG), 345–346 (FG), and 364–365 (FG). A compositionally biased stretch (polar residues) spans 87 to 102 (SGASTSRGFGSSQNPF). The disordered stretch occupies residues 323–345 (MAASPSGSTTAPPLRSGSSVVGF). The segment at 365–420 (GGSGISTSVLASGAADNALFTPRDQLMKEELEQFQSQRFTLGKIPLKPPPVELLTV) is interaction with GLE1.

In terms of assembly, probable component of the nuclear pore complex (NPC). Interacts with nuclear export protein NXF1. Interacts with GLE1. Able to form a heterotrimer with NUP155 and GLE1 in vitro. Interacts with XPO1. Post-translationally, O-glycosylated.

It localises to the nucleus. The protein localises to the nuclear pore complex. Its subcellular location is the nucleus membrane. In terms of biological role, required for the export of mRNAs containing poly(A) tails from the nucleus into the cytoplasm. The sequence is that of Nucleoporin NUP42 (Nup42) from Mus musculus (Mouse).